We begin with the raw amino-acid sequence, 403 residues long: MHNFEEELTCPICYSIFEDPRVLPCSHTFCRNCLENVLQASGNFYIWRPLRIPLKCPNCRSIIEIASTGIESLPVNFALRAIIEKYQQEDHPDVVTCPEHYRQPLNVYCLLDKKLVCGHCLTIGQHHGHPIDDLQSAYLKEKDTPQKLLKQLTDTHWTDITRLIEKLEEQKCHSEKIVQGDKEVVLQYFKELIDTLEQKKKYFLAALCDVGKMINQEYTPQIQGMKEIREQQLELMTITTSLQDESPLKFLEKIDEVRQRVQMLKQRPLPEVQPVEIYPRVSNVLKEEWSRIEIGRIKKAVIPEMRVSSKRTPCSWSDNDEKEMELFKILNIAIVSLISVILMLILLFNHHIITFLNEITSICFSEVFLSVYQSLSKNLYDLNNTVCYTLYLLKEFMWKIVSR.

An RING-type zinc finger spans residues 10-60 (CPICYSIFEDPRVLPCSHTFCRNCLENVLQASGNFYIWRPLRIPLKCPNCR). The B box-type zinc-finger motif lies at 92-134 (PDVVTCPEHYRQPLNVYCLLDKKLVCGHCLTIGQHHGHPIDDL). Zn(2+)-binding residues include cysteine 97, histidine 100, cysteine 120, and histidine 126. The stretch at 163-246 (LIEKLEEQKC…TITTSLQDES (84 aa)) forms a coiled coil. Residues 329-349 (ILNIAIVSLISVILMLILLFN) form a helical membrane-spanning segment.

This sequence belongs to the TRIM/RBCC family. In terms of assembly, interacts with ECSIT. As to expression, moderately expressed in the spleen, brain and heart and very highly expressed in the testis.

It is found in the endoplasmic reticulum membrane. It catalyses the reaction S-ubiquitinyl-[E2 ubiquitin-conjugating enzyme]-L-cysteine + [acceptor protein]-L-lysine = [E2 ubiquitin-conjugating enzyme]-L-cysteine + N(6)-ubiquitinyl-[acceptor protein]-L-lysine.. It functions in the pathway protein modification; protein ubiquitination. Its function is as follows. E3 ubiquitin ligase involved in different processes such as development and immune response. Serves as a negative regulator for innate immune signaling pathways by suppressing RLR-induced activation of IRF3/7 and NF-kappa-B via interaction with adapter ECSIT. Regulates autophagy through modulating both the transcription and the ubiquitination of BECN1. On the one hand, regulates the transcription of BECN1 through negatively modulating the NF-kappa-B pathway. On the other hand, regulates TRAF6-mediated 'Lys-63'-linked ubiquitination of BECN1, thus affecting the formation of the BECN1-PIK3C3 complex. In addition, mediates 'Lys-48'-linked ubiquitination of TRAF6 and thereby promotes TRAF6 proteasomal degradation. Also acts as a critical regulator for early embryo development from blastocyst stage to gastrula through modulating F-actin assembly and WASH1 'Lys-63'-linked ubiquitination. The protein is Tripartite motif-containing protein 59 (Trim59) of Mus musculus (Mouse).